The sequence spans 657 residues: MRTPLIDLRGIRKSYGGGDSPLVNVLRGIDLSIHTGEFVAIVGASGSGKSTLMNILGCLDRPTSGEYLFAGENVAALGSDELAWLRREAFGFVFQGYHLIPSGSAQENVEMPAIYAGTPAAERHARAAALLDRLGLASRTGNRPHQLSGGQQQRVSIARALMNGGHIILADEPTGALDSHSGAEVMTLLDELASQGHVVILITHDREVAARAKRVIEISDGLVISDTAQDASDVQRSVNPAALQAVDLRKRLSEGSGSQSAWQGELFDAIRAAWRVMWINRFRTALTLLGIVIGVASVVVMLAVGEGSKRQVMAQMSSFGSNIIYLNGKAPNPRAPKGVITLEEVAALGELPEVKMIMPVNGGQAGVRYGNLDHSSYVGGNDTHFPAIFNWPVVEGSYFSEADEQNAAAVAVIGYKVRQKLFGEQSDPVGQYILIENVPFQVVGVLQEKGATSGDLDSDNRIAIPYSSASIRLFGTQDPEYITIATRDANNVKQAEQSIRNLLQQLHHGKQDYELTNNAAMIQAEARTQNTLSLMLGSIAAISLLVGGIGVMNIMLMTVRERTREIGIRMATGARQSDILRQFLTEAVMLSVVGGLAGIVLALGMGAALLLSKVAVAFTLPAVAGAFACALITGVIFGFMPARKAARLDPVAALTSE.

An ABC transporter domain is found at 6–245 (IDLRGIRKSY…RSVNPAALQA (240 aa)). 43–50 (GASGSGKS) is a binding site for ATP. 4 helical membrane passes run 285–305 (ALTL…LAVG), 539–559 (IAAI…LMTV), 590–610 (LSVV…AALL), and 620–640 (LPAV…FGFM).

Belongs to the ABC transporter superfamily. Macrolide exporter (TC 3.A.1.122) family. In terms of assembly, part of the tripartite efflux system PvdRT-OpmQ, which is composed of an inner membrane component with both ATPase and permease domains, PvdT, a periplasmic membrane fusion protein, PvdR, and an outer membrane component, OpmQ.

The protein localises to the cell inner membrane. In terms of biological role, part of the tripartite efflux system PvdRT-OpmQ required for the secretion into the extracellular milieu of the siderophore pyoverdine (PVD), which is involved in iron acquisition. This subunit binds PVD and drives its secretion by hydrolyzing ATP. The system is responsible for export of newly synthesized PVD after the final steps of biosynthesis have taken place in the periplasm. It is also responsible for recycling of PVD after internalization of ferri-PVD into the periplasm by the outer-membrane receptor FpvA and release of iron from PVD, thus making PVD available for new cycles of iron uptake. This chain is Pyoverdine export ATP-binding/permease protein PvdT, found in Pseudomonas syringae pv. syringae (strain B728a).